The following is a 476-amino-acid chain: Aspartyl/glutamyl-tRNA(Asn/Gln) amidotransferase subunit B (476 aa).

It belongs to the GatB/GatE family. GatB subfamily. In terms of assembly, heterotrimer of A, B and C subunits.

The catalysed reaction is L-glutamyl-tRNA(Gln) + L-glutamine + ATP + H2O = L-glutaminyl-tRNA(Gln) + L-glutamate + ADP + phosphate + H(+). It carries out the reaction L-aspartyl-tRNA(Asn) + L-glutamine + ATP + H2O = L-asparaginyl-tRNA(Asn) + L-glutamate + ADP + phosphate + 2 H(+). Allows the formation of correctly charged Asn-tRNA(Asn) or Gln-tRNA(Gln) through the transamidation of misacylated Asp-tRNA(Asn) or Glu-tRNA(Gln) in organisms which lack either or both of asparaginyl-tRNA or glutaminyl-tRNA synthetases. The reaction takes place in the presence of glutamine and ATP through an activated phospho-Asp-tRNA(Asn) or phospho-Glu-tRNA(Gln). The chain is Aspartyl/glutamyl-tRNA(Asn/Gln) amidotransferase subunit B from Listeria innocua serovar 6a (strain ATCC BAA-680 / CLIP 11262).